Here is a 212-residue protein sequence, read N- to C-terminus: Small ribosomal subunit protein uS3 (212 aa).

The region spanning 39–108 is the KH type-2 domain; that stretch reads IKNYIKERYK…EITISVVEVR (70 aa).

It belongs to the universal ribosomal protein uS3 family. In terms of assembly, part of the 30S ribosomal subunit. Forms a tight complex with proteins S10 and S14.

Its function is as follows. Binds the lower part of the 30S subunit head. Binds mRNA in the 70S ribosome, positioning it for translation. This is Small ribosomal subunit protein uS3 from Aquifex aeolicus (strain VF5).